We begin with the raw amino-acid sequence, 341 residues long: Glyceraldehyde-3-phosphate dehydrogenase 1 (341 aa).

NAD(+) contacts are provided by residues Arg-13 to Ile-14, Asp-35, and Lys-85. D-glyceraldehyde 3-phosphate-binding positions include Ser-157 to Thr-159, Thr-188, Thr-217 to Gly-218, and Arg-240. The Nucleophile role is filled by Cys-158. Asn-322 contacts NAD(+).

Belongs to the glyceraldehyde-3-phosphate dehydrogenase family. As to quaternary structure, homotetramer.

It is found in the cytoplasm. It catalyses the reaction D-glyceraldehyde 3-phosphate + phosphate + NAD(+) = (2R)-3-phospho-glyceroyl phosphate + NADH + H(+). It participates in carbohydrate degradation; glycolysis; pyruvate from D-glyceraldehyde 3-phosphate: step 1/5. In Caenorhabditis elegans, this protein is Glyceraldehyde-3-phosphate dehydrogenase 1 (gpd-1).